Reading from the N-terminus, the 742-residue chain is Potassium transporter 19 (742 aa).

Over 1–46 (MSVQEDGAARPEPDVLRRHDSLYGDAEKVSNNKRHGAGGSWARTLQ) the chain is Cytoplasmic. A helical transmembrane segment spans residues 47–67 (LAFQSIGVVYGDVGTSPLYVY). Topologically, residues 68 to 83 (SSTFPNGIKHPDDLVG) are extracellular. Residues 84–104 (VLSLILYTLILIPMVKYVFIV) traverse the membrane as a helical segment. Residues 105-170 (LYANDNGDGG…QKLESSNAAK (66 aa)) lie on the Cytoplasmic side of the membrane. The helical transmembrane segment at 171–191 (IALFTITILGTSMVMGDGTLT) threads the bilayer. The Extracellular segment spans residues 192 to 206 (PAISVLSAVSGIREK). Residues 207-227 (APNLTQSQVVWISVAILFVLF) traverse the membrane as a helical segment. The Cytoplasmic portion of the chain corresponds to 228–236 (SMQRFGTDK). The helical transmembrane segment at 237–257 (VGYTFAPVISVWFLLIAGIGM) threads the bilayer. The Extracellular portion of the chain corresponds to 258 to 287 (YNLTVHEITILRAFNPKYIVDYFRRNGKEA). The N-linked (GlcNAc...) asparagine glycan is linked to Asn-259. The helical transmembrane segment at 288 to 308 (WVSLGGVVLCITGTEAMFADL) threads the bilayer. The Cytoplasmic segment spans residues 309–317 (GHFNIRAIQ). Residues 318–338 (LSFTCVLFPSVALCYMGQAAY) form a helical membrane-spanning segment. At 339–352 (LRKFPENVGDTFYR) the chain is on the extracellular side. A helical membrane pass occupies residues 353 to 373 (SIPAPLFWPVFVVAIMGAIIA). Residues 374 to 409 (SQAMLSGAFAILSKALSLGCFPRVEVVHTSNKYEGQ) are Cytoplasmic-facing. Residues 410-430 (VYIPEVNFLIGAASVAVTLAF) form a helical membrane-spanning segment. Topologically, residues 431-441 (QTTANIGNAYG) are extracellular. A helical membrane pass occupies residues 442 to 462 (ICVVTVFSITTHLMTVVMLLI). Residues 463–468 (WKVRLP) lie on the Cytoplasmic side of the membrane. A helical transmembrane segment spans residues 469–489 (FIAAFYAAFGLAEFLYLSSIL). The Extracellular segment spans residues 490 to 495 (SKFAEG). Residues 496–516 (GYLPFCFSLVLMALMATWHYV) form a helical membrane-spanning segment. Residues 517–742 (HVKRYWYELD…LLKVGITYEI (226 aa)) lie on the Cytoplasmic side of the membrane.

The protein belongs to the HAK/KUP transporter (TC 2.A.72.3) family.

It is found in the membrane. High-affinity potassium transporter. The chain is Potassium transporter 19 (HAK19) from Oryza sativa subsp. japonica (Rice).